A 125-amino-acid chain; its full sequence is MNLEYVHVVQKFNQVLLELTKKVCTVVGGNKPTYWYHHIRRVCSECPSMPMSMIGPYLNVYKTQIVTKDKNFFMNFDPPAHNEYTFIIQKLKEAARNMPEDELEQYWAKLLFLLKSYIKCKPFIN.

This sequence belongs to the asfivirus H124R family.

The protein localises to the virion. This is an uncharacterized protein from Ornithodoros (relapsing fever ticks).